The chain runs to 208 residues: F-box/kelch-repeat protein At2g43270 (208 aa).

The region spanning 1-44 (MIYVVPDLLEEIFLGLPLKSILRFKTVSKQWRSILESKSFAERR) is the F-box domain. The stretch at 149–200 (RDKFNGSYKVVRMCFSPVEKCEVLDVETGEWSELNPPPNDIDVGRKSVCVNG) is one Kelch repeat.

The protein is F-box/kelch-repeat protein At2g43270 of Arabidopsis thaliana (Mouse-ear cress).